The following is a 509-amino-acid chain: Photosystem II CP47 reaction center protein (509 aa).

6 helical membrane passes run 21 to 36 (AVHM…WAGS), 101 to 115 (IVFS…IWHW), 140 to 156 (GIHL…FGAF), 203 to 218 (IAAG…FHLS), 237 to 253 (VLSS…AFVV), and 458 to 473 (SFAL…HGSR).

This sequence belongs to the PsbB/PsbC family. PsbB subfamily. PSII is composed of 1 copy each of membrane proteins PsbA, PsbB, PsbC, PsbD, PsbE, PsbF, PsbH, PsbI, PsbJ, PsbK, PsbL, PsbM, PsbT, PsbX, PsbY, PsbZ, Psb30/Ycf12, at least 3 peripheral proteins of the oxygen-evolving complex and a large number of cofactors. It forms dimeric complexes. Binds multiple chlorophylls. PSII binds additional chlorophylls, carotenoids and specific lipids. is required as a cofactor.

It is found in the plastid. It localises to the chloroplast thylakoid membrane. Functionally, one of the components of the core complex of photosystem II (PSII). It binds chlorophyll and helps catalyze the primary light-induced photochemical processes of PSII. PSII is a light-driven water:plastoquinone oxidoreductase, using light energy to abstract electrons from H(2)O, generating O(2) and a proton gradient subsequently used for ATP formation. The sequence is that of Photosystem II CP47 reaction center protein from Populus deltoides (Eastern poplar).